Consider the following 285-residue polypeptide: Protoheme IX farnesyltransferase (285 aa).

Transmembrane regions (helical) follow at residues 19–39 (RIIW…GKLM), 40–60 (PLSI…SMII), 90–110 (AIYV…LDNP), 111–131 (LTSF…TVWL), 135–155 (SPLN…AGYA), 165–185 (SILL…ALAL), 220–240 (IPFA…VAGI), and 265–285 (FKFS…TRLI).

Belongs to the UbiA prenyltransferase family. Protoheme IX farnesyltransferase subfamily.

It is found in the cell membrane. It catalyses the reaction heme b + (2E,6E)-farnesyl diphosphate + H2O = Fe(II)-heme o + diphosphate. It participates in porphyrin-containing compound metabolism; heme O biosynthesis; heme O from protoheme: step 1/1. Its function is as follows. Converts heme B (protoheme IX) to heme O by substitution of the vinyl group on carbon 2 of heme B porphyrin ring with a hydroxyethyl farnesyl side group. The protein is Protoheme IX farnesyltransferase of Metallosphaera sedula (strain ATCC 51363 / DSM 5348 / JCM 9185 / NBRC 15509 / TH2).